Here is a 404-residue protein sequence, read N- to C-terminus: Inosine-5'-monophosphate dehydrogenase (404 aa).

NAD(+)-binding positions include Asp-172 and 222 to 224 (GIG). 2 residues coordinate K(+): Gly-224 and Gly-226. Residue Ser-227 coordinates IMP. Cys-229 serves as a coordination point for K(+). Catalysis depends on Cys-229, which acts as the Thioimidate intermediate. Residues 262 to 264 (DGG), 285 to 286 (GN), and 309 to 313 (YVGMG) each bind IMP. Arg-325 functions as the Proton acceptor in the catalytic mechanism. Glu-340 contacts IMP. K(+) contacts are provided by Glu-394, Ser-395, and His-396.

It belongs to the IMPDH/GMPR family. In terms of assembly, homotetramer. K(+) serves as cofactor.

The enzyme catalyses IMP + NAD(+) + H2O = XMP + NADH + H(+). It participates in purine metabolism; XMP biosynthesis via de novo pathway; XMP from IMP: step 1/1. Mycophenolic acid (MPA) is a non-competitive inhibitor that prevents formation of the closed enzyme conformation by binding to the same site as the amobile flap. In contrast, mizoribine monophosphate (MZP) is a competitive inhibitor that induces the closed conformation. MPA is a potent inhibitor of mammalian IMPDHs but a poor inhibitor of the bacterial enzymes. MZP is a more potent inhibitor of bacterial IMPDH. Functionally, catalyzes the conversion of inosine 5'-phosphate (IMP) to xanthosine 5'-phosphate (XMP), the first committed and rate-limiting step in the de novo synthesis of guanine nucleotides, and therefore plays an important role in the regulation of cell growth. Essential for mouse infection by tick bite and critical for the survival in environments that appear to lack sufficient amounts of guanine, guanosine, and/or deoxyguanosine to support spirochete growth, such as mammalian host tissues. The protein is Inosine-5'-monophosphate dehydrogenase of Borreliella burgdorferi (strain ATCC 35210 / DSM 4680 / CIP 102532 / B31) (Borrelia burgdorferi).